Reading from the N-terminus, the 407-residue chain is MTGRICILVMDSFGIGASLDAARYGDAGANTLVHIYEACKRGECDIEGARKGPLMLPNLAGKGLYHAAMASSGLPFIDLATLAIPSGYYGYAVEQSLGKDTPSGHWEMAGVPVTFEWGYFPDKPYCFPEELISEFIKQCNLPGVLGEKHASGTIIMDELGEEHIRTGKPIVYTSADSVFQIAAHEEAFGLQRLYDICKIARNLVDKYQIGRVIARPFTGKPGSFKRTGNRKDYATPPPEKTLLDFLKEDGREVIAIGKIADIYAHQGVTQEIKADGNMALFDATLSAMKTAPQGSLVFTNFVDFDSSYGHRRDIAGYAHALEQFDARLPELEVLLQPNDMVFIAADHGCDPTFPGSDHTREHIPVLVFGPQVNSKFIGRRDCFADIGQSIAEHLQLSSPLTHGVSFL.

D11, D305, H310, D346, H347, and H358 together coordinate Mn(2+).

This sequence belongs to the phosphopentomutase family. It depends on Mn(2+) as a cofactor.

It is found in the cytoplasm. The enzyme catalyses 2-deoxy-alpha-D-ribose 1-phosphate = 2-deoxy-D-ribose 5-phosphate. It catalyses the reaction alpha-D-ribose 1-phosphate = D-ribose 5-phosphate. The protein operates within carbohydrate degradation; 2-deoxy-D-ribose 1-phosphate degradation; D-glyceraldehyde 3-phosphate and acetaldehyde from 2-deoxy-alpha-D-ribose 1-phosphate: step 1/2. Its function is as follows. Isomerase that catalyzes the conversion of deoxy-ribose 1-phosphate (dRib-1-P) and ribose 1-phosphate (Rib-1-P) to deoxy-ribose 5-phosphate (dRib-5-P) and ribose 5-phosphate (Rib-5-P), respectively. The chain is Phosphopentomutase from Legionella pneumophila (strain Lens).